The sequence spans 247 residues: tRNA (guanine-N(7)-)-methyltransferase (247 aa).

S-adenosyl-L-methionine-binding positions include Gly70, 93–94 (EI), 128–129 (NA), and Leu148. The active site involves Asp151. 226–228 (SEE) lines the S-adenosyl-L-methionine pocket.

Belongs to the class I-like SAM-binding methyltransferase superfamily. TrmB family.

The protein localises to the nucleus. The catalysed reaction is guanosine(46) in tRNA + S-adenosyl-L-methionine = N(7)-methylguanosine(46) in tRNA + S-adenosyl-L-homocysteine. Its pathway is tRNA modification; N(7)-methylguanine-tRNA biosynthesis. Its function is as follows. Catalyzes the formation of N(7)-methylguanine at position 46 (m7G46) in tRNA. The protein is tRNA (guanine-N(7)-)-methyltransferase of Drosophila pseudoobscura pseudoobscura (Fruit fly).